Consider the following 248-residue polypeptide: Ras-related protein Rab-28 (248 aa).

The interval 1-30 (MTTMGEDEAPALPKKSPLPEKIDEADVDDD) is disordered. A GTP-binding site is contributed by 42–50 (GDGASGKTS). Residues 64 to 72 (YHQTLGLDF) carry the Effector region motif. GTP contacts are provided by residues 91–95 (DIGGQ), 152–155 (NKTD), and 182–184 (SAK). The interval 227 to 248 (QSDASYARRSDQSRSTSVCSIT) is disordered. A compositionally biased stretch (polar residues) spans 239–248 (SRSTSVCSIT).

It belongs to the small GTPase superfamily. Rab family. In terms of tissue distribution, expressed in amphid and phasmid ciliated sensory neurons.

It localises to the cell projection. The protein resides in the cilium membrane. It is found in the perikaryon. Its subcellular location is the cytoplasm. The protein localises to the cytoskeleton. It localises to the cilium axoneme. GTPase. Intraflagellar transport (IFT) cargo that undergoes bidirectional IFT along the ciliary axoneme when in active GTP-bound state in amphid and phasmid ciliated sensory neurons. Targeting and function as IFT cargo may depend on the BBSome, an IFT cargo adapter. Does not undergo IFT when in inactive GDP-bound state. May in turn play a role in cilium structure and/or function in ciliated sensory neurons. The polypeptide is Ras-related protein Rab-28 (Caenorhabditis elegans).